A 364-amino-acid polypeptide reads, in one-letter code: tRNA-specific 2-thiouridylase MnmA 1 (364 aa).

ATP contacts are provided by residues 10–17 (GMSGGVDS) and Met-36. Cys-106 (nucleophile) is an active-site residue. Cysteines 106 and 204 form a disulfide. ATP is bound at residue Gly-130. The interval 154–156 (KDQ) is interaction with tRNA. The active-site Cysteine persulfide intermediate is the Cys-204. The segment at 310 to 311 (RY) is interaction with tRNA.

It belongs to the MnmA/TRMU family.

It localises to the cytoplasm. The catalysed reaction is S-sulfanyl-L-cysteinyl-[protein] + uridine(34) in tRNA + AH2 + ATP = 2-thiouridine(34) in tRNA + L-cysteinyl-[protein] + A + AMP + diphosphate + H(+). Its function is as follows. Catalyzes the 2-thiolation of uridine at the wobble position (U34) of tRNA, leading to the formation of s(2)U34. The polypeptide is tRNA-specific 2-thiouridylase MnmA 1 (Caldanaerobacter subterraneus subsp. tengcongensis (strain DSM 15242 / JCM 11007 / NBRC 100824 / MB4) (Thermoanaerobacter tengcongensis)).